The sequence spans 393 residues: Tryptophan synthase beta chain (393 aa).

The residue at position 85 (Lys85) is an N6-(pyridoxal phosphate)lysine.

Belongs to the TrpB family. Tetramer of two alpha and two beta chains. Requires pyridoxal 5'-phosphate as cofactor.

The enzyme catalyses (1S,2R)-1-C-(indol-3-yl)glycerol 3-phosphate + L-serine = D-glyceraldehyde 3-phosphate + L-tryptophan + H2O. It participates in amino-acid biosynthesis; L-tryptophan biosynthesis; L-tryptophan from chorismate: step 5/5. In terms of biological role, the beta subunit is responsible for the synthesis of L-tryptophan from indole and L-serine. This is Tryptophan synthase beta chain (trpB) from Helicobacter pylori (strain J99 / ATCC 700824) (Campylobacter pylori J99).